Reading from the N-terminus, the 362-residue chain is Cobalt-precorrin-5B C(1)-methyltransferase (362 aa).

The protein belongs to the CbiD family.

It carries out the reaction Co-precorrin-5B + S-adenosyl-L-methionine = Co-precorrin-6A + S-adenosyl-L-homocysteine. It participates in cofactor biosynthesis; adenosylcobalamin biosynthesis; cob(II)yrinate a,c-diamide from sirohydrochlorin (anaerobic route): step 6/10. Its function is as follows. Catalyzes the methylation of C-1 in cobalt-precorrin-5B to form cobalt-precorrin-6A. This chain is Cobalt-precorrin-5B C(1)-methyltransferase, found in Burkholderia orbicola (strain MC0-3).